The sequence spans 295 residues: MNYVFCIIGIIGYRLCLEQLSIYNNLYNWLIKKGYSVILENNIAQALNLNNVISGSTFDIGEKADLAIIIGGDGSMLRIAKILSNYPIKVIGINTGNLGFLTDLNPKSALSTLNYILNGNFYEEKRFLLNVITIKNNIKSKKHILNEVVVHSNNVAKMIEFKVYIDDVFSFFQRADGLIISTPTGSTAYSLSAGGPILMPLLNAIIIIPMFPHGLYSRPLVISAKSKIKIKFSKKILNLSISCDGTSPFKVYRNNEIVIKKSKKFLKLIHSNNYNYFNVLRKKLGWSKKFFKKIK.

Aspartate 73 functions as the Proton acceptor in the catalytic mechanism. NAD(+)-binding positions include 73 to 74 (DG), arginine 78, 146 to 147 (NE), lysine 157, arginine 174, aspartate 176, and 187 to 192 (TAYSLS).

Belongs to the NAD kinase family. The cofactor is a divalent metal cation.

It is found in the cytoplasm. The enzyme catalyses NAD(+) + ATP = ADP + NADP(+) + H(+). In terms of biological role, involved in the regulation of the intracellular balance of NAD and NADP, and is a key enzyme in the biosynthesis of NADP. Catalyzes specifically the phosphorylation on 2'-hydroxyl of the adenosine moiety of NAD to yield NADP. This chain is NAD kinase, found in Wigglesworthia glossinidia brevipalpis.